A 242-amino-acid polypeptide reads, in one-letter code: DNA repair protein RecO (242 aa).

It belongs to the RecO family. As to quaternary structure, monomer.

Functionally, involved in DNA repair and RecF pathway recombination. This Salmonella gallinarum (strain 287/91 / NCTC 13346) protein is DNA repair protein RecO.